A 362-amino-acid chain; its full sequence is Peptide chain release factor 2 (362 aa).

An N5-methylglutamine modification is found at glutamine 250.

This sequence belongs to the prokaryotic/mitochondrial release factor family. Methylated by PrmC. Methylation increases the termination efficiency of RF2.

Its subcellular location is the cytoplasm. In terms of biological role, peptide chain release factor 2 directs the termination of translation in response to the peptide chain termination codons UGA and UAA. The chain is Peptide chain release factor 2 from Clostridium perfringens (strain ATCC 13124 / DSM 756 / JCM 1290 / NCIMB 6125 / NCTC 8237 / Type A).